The sequence spans 495 residues: RNA-binding KH domain-containing protein PEPPER (495 aa).

KH domains are found at residues 73 to 140 (DCVF…MDAV), 165 to 234 (FSSV…LEAI), and 340 to 403 (QVSQ…EQLI). Residues 474–495 (GQTYGSEYRPASDVGGYSSYNL) are disordered.

In terms of assembly, interacts with HUA1 and HEN4. In terms of tissue distribution, detected in roots, shoots, leaves, flowers and fruits.

The protein resides in the nucleus. Regulates vegetative and gynoecium development. In concert with HUA2, antagonizes FLK by positively regulating FLC probably at transcriptional and post-transcriptional levels, and thus acts as a negative regulator of flowering. This Arabidopsis thaliana (Mouse-ear cress) protein is RNA-binding KH domain-containing protein PEPPER.